Consider the following 321-residue polypeptide: 4-dihydromethyl-trisporate dehydrogenase (321 aa).

Tyrosine 51 acts as the Proton donor in catalysis. Histidine 113 is a substrate binding site.

The protein belongs to the aldo/keto reductase family.

Its pathway is pheromone biosynthesis; trisporate biosynthesis. Functionally, catalyzes the NADP-dependent oxidation of (+) mating-type specific precursor 4-dihydromethyl-trisporate to methyl-trisporate. The chain is 4-dihydromethyl-trisporate dehydrogenase (tdh) from Mucor mucedo (Common pinmould).